Reading from the N-terminus, the 479-residue chain is Ankyrin repeat, SAM and basic leucine zipper domain-containing protein 1 (479 aa).

Phosphoserine occurs at positions 22 and 24. 6 ANK repeats span residues 49–78 (EKNETFKKALTTGDILLVKELLNSGISVDS), 82–111 (YGWTPLMYAASVSNVELVRVLLDRGANASF), 114–148 (DKQTILITACSARGSEEQILKCVELLLSRNADPNV), 152–181 (RLMTPIMYAARDGHTQVVALLVAHGAEVNT), 185–214 (NGYTALTWAARQGHKNVVLKLLELGANKML), and 218–247 (DGKTPSEIAKRNKHVEIFSFLSLTLNPLEG). The region spanning 276 to 338 (SYTALGDLEI…KILDALKELQ (63 aa)) is the SAM domain.

Interacts with DDX4, PIWIL1, RANBP9 and TDRD1.

Its subcellular location is the cytoplasm. Its function is as follows. Plays a central role during spermatogenesis by repressing transposable elements and preventing their mobilization, which is essential for the germline integrity. Acts via the piRNA metabolic process, which mediates the repression of transposable elements during meiosis by forming complexes composed of piRNAs and Piwi proteins and governs the methylation and subsequent repression of transposons. Its association with pi-bodies suggests a participation in the primary piRNAs metabolic process. Required prior to the pachytene stage to facilitate the production of multiple types of piRNAs, including those associated with repeats involved in the regulation of retrotransposons. May act by mediating protein-protein interactions during germ cell maturation. The polypeptide is Ankyrin repeat, SAM and basic leucine zipper domain-containing protein 1 (ASZ1) (Rhinolophus ferrumequinum (Greater horseshoe bat)).